The primary structure comprises 97 residues: Ataxin-7-like protein 3B (97 aa).

A disordered region spans residues 76-97 (SLPGDPGDGPQTELQRSPPEFQ). Ser92 carries the phosphoserine modification.

The protein belongs to the SGF11 family. In terms of assembly, interacts strongly with ENY2. Interacts weakly with USP22.

It localises to the cytoplasm. In terms of biological role, by binding to ENY2, interferes with the nuclear functions of the deubiquitinase (DUB) module of the SAGA complex which consists of ENY2, ATXN7, ATXN7L3 and the histone deubiquitinating component USP22. Affects USP22 DUB activity toward histones indirectly by changing the subcellular distribution of ENY2 and altering ENY2 availability for ATXN7L3 interaction. Regulates H2B monoubiquitination (H2Bub1) levels through cytoplasmic sequestration of ENY2 resulting in loss of nuclear ENY2-ATXN7L3 association which destabilizes ATXN7L3. Affects protein expression levels of ENY2 and ATXN7L3. This chain is Ataxin-7-like protein 3B (Atxn7l3b), found in Mus musculus (Mouse).